Here is a 201-residue protein sequence, read N- to C-terminus: Holliday junction branch migration complex subunit RuvA (201 aa).

The segment at 1–64 (MIGRLYGKII…EDAHLLFGFA (64 aa)) is domain I. The segment at 65–143 (QKQDRTLFRE…GIAQTDFFVE (79 aa)) is domain II. The tract at residues 144 to 154 (HSHETMVATYE) is flexible linker. The tract at residues 154 to 201 (EIDASEEARDALLALGYKLTDAEKMIKKVHKSGATSEQLIRDALKASL) is domain III.

The protein belongs to the RuvA family. As to quaternary structure, homotetramer. Forms an RuvA(8)-RuvB(12)-Holliday junction (HJ) complex. HJ DNA is sandwiched between 2 RuvA tetramers; dsDNA enters through RuvA and exits via RuvB. An RuvB hexamer assembles on each DNA strand where it exits the tetramer. Each RuvB hexamer is contacted by two RuvA subunits (via domain III) on 2 adjacent RuvB subunits; this complex drives branch migration. In the full resolvosome a probable DNA-RuvA(4)-RuvB(12)-RuvC(2) complex forms which resolves the HJ.

It localises to the cytoplasm. In terms of biological role, the RuvA-RuvB-RuvC complex processes Holliday junction (HJ) DNA during genetic recombination and DNA repair, while the RuvA-RuvB complex plays an important role in the rescue of blocked DNA replication forks via replication fork reversal (RFR). RuvA specifically binds to HJ cruciform DNA, conferring on it an open structure. The RuvB hexamer acts as an ATP-dependent pump, pulling dsDNA into and through the RuvAB complex. HJ branch migration allows RuvC to scan DNA until it finds its consensus sequence, where it cleaves and resolves the cruciform DNA. The polypeptide is Holliday junction branch migration complex subunit RuvA (Haemophilus ducreyi (strain 35000HP / ATCC 700724)).